The following is a 205-amino-acid chain: DNA-directed RNA polymerase RPB5 homolog (205 aa).

Belongs to the archaeal RpoH/eukaryotic RPB5 RNA polymerase subunit family. As to quaternary structure, part of the viral DNA-directed RNA polymerase that consists of 8 polII-like subunits (RPB1, RPB2, RPB3, RPB5, RPB6, RPB7, RPB9, RPB10), a capping enzyme and a termination factor.

It is found in the host cytoplasm. The protein resides in the virion. Functionally, component of the DNA-directed RNA polymerase (RNAP) that catalyzes the transcription in the cytoplasm of viral DNA into RNA using the four ribonucleoside triphosphates as substrates. The polypeptide is DNA-directed RNA polymerase RPB5 homolog (Ornithodoros (relapsing fever ticks)).